A 906-amino-acid chain; its full sequence is Cadherin-2 (906 aa).

The first 25 residues, 1–25 (MCRIAGAPRTLLPLLAALLQASVEA), serve as a signal peptide directing secretion. A propeptide spanning residues 26 to 159 (SGEIALCKTG…HNGYLQRQKR (134 aa)) is cleaved from the precursor. A phosphoserine mark is found at S96 and S135. Cadherin domains are found at residues 160–267 (DWVI…RPEF), 268–382 (LHQV…PPEF), 383–497 (TAMT…NPYF), 498–603 (APNP…DNAP), and 604–714 (QVLP…DVDR). Over 160–724 (DWVIPPINLP…IVGAGLGTGA (565 aa)) the chain is Extracellular. Position 170 (E170) interacts with Ca(2+). A glycan (N-linked (GlcNAc...) asparagine) is linked at N190. Ca(2+) is bound by residues D226, E228, D259, M260, N261, D262, and N263. N273 carries an N-linked (GlcNAc...) asparagine glycan. Positions 293, 295, and 301 each coordinate Ca(2+). A glycan (N-linked (GlcNAc...) asparagine) is linked at N325. D353 contributes to the Ca(2+) binding site. N402, N572, N622, N651, and N692 each carry an N-linked (GlcNAc...) asparagine glycan. A helical membrane pass occupies residues 725 to 745 (IIAILLCIIILLILVLMFVVW). Topologically, residues 746-906 (MKRRDKERQA…LAEMYGGGDD (161 aa)) are cytoplasmic. Residues 863 to 880 (SGSTAGSLSSLNSSSSGG) are compositionally biased toward low complexity. Positions 863–884 (SGSTAGSLSSLNSSSSGGEQDY) are disordered.

In terms of assembly, homodimer (via extracellular region). Can also form heterodimers with other cadherins (via extracellular region). Dimerization occurs in trans, i.e. with a cadherin chain from another cell. Interacts with CDCP1. Interacts with PCDH8; this complex may also include TAOK2. The interaction with PCDH8 may lead to internalization through TAOK2/p38 MAPK pathway. Identified in a complex containing FGFR4, NCAM1, CDH2, PLCG1, FRS2, SRC, SHC1, GAP43 and CTTN. May interact with OBSCN (via protein kinase domain 2). Interacts with FBXO45. In terms of processing, cleaved by MMP24. Ectodomain cleavage leads to the generation of a soluble 90 kDa N-terminal soluble fragment and a 45 kDa membrane-bound C-terminal fragment 1 (CTF1), which is further cleaved by gamma-secretase into a 35 kDa. Cleavage in neural stem cells by MMP24 affects CDH2-mediated anchorage of neural stem cells to ependymocytes in the adult subependymal zone, leading to modulate neural stem cell quiescence. Post-translationally, may be phosphorylated by OBSCN.

Its subcellular location is the cell membrane. The protein localises to the sarcolemma. It is found in the cell junction. The protein resides in the cell surface. It localises to the desmosome. Its subcellular location is the adherens junction. Calcium-dependent cell adhesion protein; preferentially mediates homotypic cell-cell adhesion by dimerization with a CDH2 chain from another cell. Cadherins may thus contribute to the sorting of heterogeneous cell types. Acts as a regulator of neural stem cells quiescence by mediating anchorage of neural stem cells to ependymocytes in the adult subependymal zone: upon cleavage by MMP24, CDH2-mediated anchorage is affected, leading to modulate neural stem cell quiescence. Plays a role in cell-to-cell junction formation between pancreatic beta cells and neural crest stem (NCS) cells, promoting the formation of processes by NCS cells. Required for proper neurite branching. Required for pre- and postsynaptic organization. CDH2 may be involved in neuronal recognition mechanism. In hippocampal neurons, may regulate dendritic spine density. This chain is Cadherin-2 (CDH2), found in Otolemur garnettii (Small-eared galago).